A 324-amino-acid polypeptide reads, in one-letter code: Adenine deaminase (324 aa).

Zn(2+) is bound by residues His-8, His-10, and His-186. Glu-189 acts as the Proton donor in catalysis. Zn(2+) is bound at residue Asp-267. Position 268 (Asp-268) interacts with substrate.

It belongs to the metallo-dependent hydrolases superfamily. Adenosine and AMP deaminases family. Adenine deaminase type 2 subfamily. It depends on Zn(2+) as a cofactor.

The enzyme catalyses adenine + H2O + H(+) = hypoxanthine + NH4(+). Catalyzes the hydrolytic deamination of adenine to hypoxanthine. Plays an important role in the purine salvage pathway and in nitrogen catabolism. The protein is Adenine deaminase of Mesorhizobium japonicum (strain LMG 29417 / CECT 9101 / MAFF 303099) (Mesorhizobium loti (strain MAFF 303099)).